The sequence spans 297 residues: MSGNGVHGVHGALQLLRSLPKVSLANLRPNPGSKKPERRRGRGRYRGRKCGRGHKGERQRGNRPRLGFEGGQTPFYLSIPKYGFNEGHSCRRKYHPLSLQKLQYLIDLGRVDPTQPIDLTQLTNARGVTVQPLKRDYGVQLVEEGADIFAAKINIEVQRASELAIAAIEKNGGVVTASFYDPRSLEILIRPVPFFLRGQPIPKRMLPPEDLVRYYTDASNRGYLADPSKVAEARLELAKKYGYTLPDITKDELFKMLSTRKDPRQIFFGLAPGWIVNMADKKILKPTDERLLKYYSS.

The N-terminal 21 residues, 1-21 (MSGNGVHGVHGALQLLRSLPK), are a transit peptide targeting the mitochondrion. The interval 23-69 (SLANLRPNPGSKKPERRRGRGRYRGRKCGRGHKGERQRGNRPRLGFE) is disordered. Residues 36–53 (PERRRGRGRYRGRKCGRG) are compositionally biased toward basic residues.

Belongs to the universal ribosomal protein uL15 family. In terms of assembly, component of the mitochondrial ribosome large subunit (39S) which comprises a 16S rRNA and about 50 distinct proteins.

It localises to the mitochondrion. In Gallus gallus (Chicken), this protein is Large ribosomal subunit protein uL15m (MRPL15).